A 1252-amino-acid chain; its full sequence is HEAT repeat-containing protein 6 (1252 aa).

One copy of the HEAT 1 repeat lies at 230-269 (PDLLGKSGLLMKLSDVTHSDPEVRRAAVHCMANLCLSVPG). The segment at 365 to 417 (DGRSPVKPQQPESSAARPSANKKKKYKVKPKKTQQGEKAEEEEPYGEVDAAPG) is disordered. Residues 384 to 396 (ANKKKKYKVKPKK) are compositionally biased toward basic residues. Serine 471 and serine 474 each carry phosphoserine. HEAT repeat units lie at residues 524–562 (ELGSPQSVSLMTLTLKDPSPKTRACALQVLSAILEGSKQ), 586–624 (SSIRELHRCLLLALVAESSSQTLTQIIKCLANLVSNAPY), and 630–667 (SLLTKVWNHIKPYIRHKDVNVRVSSLTLLGAVVSTHAP). Threonine 689 is modified (phosphothreonine). Serine 714 bears the Phosphoserine mark.

The sequence is that of HEAT repeat-containing protein 6 (Heatr6) from Rattus norvegicus (Rat).